The primary structure comprises 343 residues: Hydroxycarboxylic acid receptor 1 (343 aa).

Residues 1–21 (MDNGSCCLIEGEPISQVMPPL) are Extracellular-facing. Asparagine 3 carries an N-linked (GlcNAc...) asparagine glycan. A helical transmembrane segment spans residues 22 to 42 (LILVFVLGALGNGIALCGFCF). The Cytoplasmic segment spans residues 43 to 49 (HMKTWKS). The helical transmembrane segment at 50-70 (STIYLFNLAVADFLLMICLPL) threads the bilayer. The Extracellular segment spans residues 71–90 (RTDYYLRRRHWIFGDIACRL). Cysteine 88 and cysteine 165 form a disulfide bridge. A helical membrane pass occupies residues 91 to 111 (VLFKLAMNRAGSIVFLTVVAV). Over 112–131 (DRYFKVVHPHHMVNAISNRT) the chain is Cytoplasmic. The chain crosses the membrane as a helical span at residues 132-152 (AAATACVLWTLVILGTVYLLM). The Extracellular portion of the chain corresponds to 153–182 (ESHLCVQGTLSSCESFIMESANGWHDVMFQ). A helical transmembrane segment spans residues 183-203 (LEFFLPLTIILFCSVNVVWSL). The Cytoplasmic portion of the chain corresponds to 204–220 (RRRQQLTRQARMRRATR). The helical transmembrane segment at 221-241 (FIMVVASVFITCYLPSVLARL) threads the bilayer. Residues 242-259 (YFLWTVPTSACDPSVHTA) lie on the Extracellular side of the membrane. A helical transmembrane segment spans residues 260-280 (LHVTLSFTYLNSMLDPLVYYF). At 281–343 (SSPSLPKFYT…SDGQWDLQVC (63 aa)) the chain is on the cytoplasmic side. Residues 319–334 (CSKSSIDGANRSQRPS) are compositionally biased toward polar residues. The interval 319–343 (CSKSSIDGANRSQRPSDGQWDLQVC) is disordered.

It belongs to the G-protein coupled receptor 1 family. In terms of tissue distribution, highly expressed in subcutaneous fat and omental fat and detectable in lower levels in brain and many other tissues. High levels detected in epididymal and subcutaneous fat with slightly lower in omental fat, low levels are detected in the brain, skeletal muscle, kidney, liver and the pancreas (at protein level).

Its subcellular location is the cell membrane. Functionally, acts as a receptor for L-lactate and mediates its anti-lipolytic effect through a G(i)-protein-mediated pathway. This is Hydroxycarboxylic acid receptor 1 (Hcar1) from Mus musculus (Mouse).